The sequence spans 434 residues: Chaperone SurA (434 aa).

A signal peptide spans 1-20; it reads MKNWRTLILGLVICANTAFA. 2 PpiC domains span residues 171–272 and 282–382; these read DTEL…KVND and VTEV…QLVD.

It localises to the periplasm. It carries out the reaction [protein]-peptidylproline (omega=180) = [protein]-peptidylproline (omega=0). Functionally, chaperone involved in the correct folding and assembly of outer membrane proteins. Recognizes specific patterns of aromatic residues and the orientation of their side chains, which are found more frequently in integral outer membrane proteins. May act in both early periplasmic and late outer membrane-associated steps of protein maturation. This chain is Chaperone SurA, found in Yersinia pestis bv. Antiqua (strain Nepal516).